The chain runs to 83 residues: Cell division topological specificity factor (83 aa).

The protein belongs to the MinE family.

Its function is as follows. Prevents the cell division inhibition by proteins MinC and MinD at internal division sites while permitting inhibition at polar sites. This ensures cell division at the proper site by restricting the formation of a division septum at the midpoint of the long axis of the cell. The protein is Cell division topological specificity factor of Acidithiobacillus ferrooxidans (strain ATCC 23270 / DSM 14882 / CIP 104768 / NCIMB 8455) (Ferrobacillus ferrooxidans (strain ATCC 23270)).